The primary structure comprises 368 residues: Chaperone protein DnaJ (368 aa).

Residues 5-69 (DYYEVLGLDK…QKRAQYDRFG (65 aa)) enclose the J domain. Residues 126 to 208 (GKTETIELEI…CHGSGHVKKK (83 aa)) form a CR-type zinc finger. Positions 139, 142, 156, 159, 182, 185, 196, and 199 each coordinate Zn(2+). CXXCXGXG motif repeat units follow at residues 139-146 (CDTCMGSG), 156-163 (CNRCGGSG), 182-189 (CSQCHGSG), and 196-203 (CPTCHGSG).

Belongs to the DnaJ family. As to quaternary structure, homodimer. It depends on Zn(2+) as a cofactor.

Its subcellular location is the cytoplasm. Participates actively in the response to hyperosmotic and heat shock by preventing the aggregation of stress-denatured proteins and by disaggregating proteins, also in an autonomous, DnaK-independent fashion. Unfolded proteins bind initially to DnaJ; upon interaction with the DnaJ-bound protein, DnaK hydrolyzes its bound ATP, resulting in the formation of a stable complex. GrpE releases ADP from DnaK; ATP binding to DnaK triggers the release of the substrate protein, thus completing the reaction cycle. Several rounds of ATP-dependent interactions between DnaJ, DnaK and GrpE are required for fully efficient folding. Also involved, together with DnaK and GrpE, in the DNA replication of plasmids through activation of initiation proteins. The sequence is that of Chaperone protein DnaJ from Exiguobacterium sp. (strain ATCC BAA-1283 / AT1b).